The following is a 41-amino-acid chain: Cytochrome b559 subunit beta (41 aa).

A helical membrane pass occupies residues 16 to 32 (WLAVHALAVPTVFFLGA). His20 is a binding site for heme.

Belongs to the PsbE/PsbF family. In terms of assembly, heterodimer of an alpha subunit and a beta subunit. PSII is composed of 1 copy each of membrane proteins PsbA, PsbB, PsbC, PsbD, PsbE, PsbF, PsbH, PsbI, PsbJ, PsbK, PsbL, PsbM, PsbT, PsbX, PsbY, PsbZ, Psb30/Ycf12, at least 3 peripheral proteins of the oxygen-evolving complex and a large number of cofactors. It forms dimeric complexes. The cofactor is heme b.

The protein resides in the plastid. It is found in the chloroplast thylakoid membrane. In terms of biological role, this b-type cytochrome is tightly associated with the reaction center of photosystem II (PSII). PSII is a light-driven water:plastoquinone oxidoreductase that uses light energy to abstract electrons from H(2)O, generating O(2) and a proton gradient subsequently used for ATP formation. It consists of a core antenna complex that captures photons, and an electron transfer chain that converts photonic excitation into a charge separation. This Chlorella vulgaris (Green alga) protein is Cytochrome b559 subunit beta.